The sequence spans 323 residues: Olfactory receptor 6T1 (323 aa).

The Extracellular segment spans residues 1 to 25 (MNPENWTQVTSFVLLGFPSSHLIQF). Asparagine 5 is a glycosylation site (N-linked (GlcNAc...) asparagine). Residues 26–46 (LVFLGLMVTYIVTATGKLLII) form a helical membrane-spanning segment. The Cytoplasmic segment spans residues 47–54 (VLSWIDQR). The helical transmembrane segment at 55 to 75 (LHIQMYFFLRNFSFLELLLVT) threads the bilayer. Residues 76 to 99 (VVVPKMLVVILTGDHTISFVSCII) lie on the Extracellular side of the membrane. Cysteine 97 and cysteine 189 are oxidised to a cystine. The helical transmembrane segment at 100 to 120 (QSYLYFFLGTTDFFLLAVMSL) threads the bilayer. Residues 121–139 (DRYLAICRPLRYETLMNGH) lie on the Cytoplasmic side of the membrane. Residues 140 to 160 (VCSQLVLASWLAGFLWVLCPT) form a helical membrane-spanning segment. At 161 to 197 (VLMASLPFCGPNGIDHFFRDSWPLLRLSCGDTHLLKL) the chain is on the extracellular side. A helical membrane pass occupies residues 198–217 (VAFMLSTLVLLGSLALTSVS). Residues 218–237 (YACILATVLRAPTAAERRKA) are Cytoplasmic-facing. A helical transmembrane segment spans residues 238–258 (FSTCASHLTVVVIIYGSSIFL). Residues 259–271 (YIRMSEAQSKLLN) lie on the Extracellular side of the membrane. A helical transmembrane segment spans residues 272–292 (KGASVLSCIITPLLNPFIFTL). Over 293–323 (RNDKVQQALREALGWPRLTAVMKLRVTSQRK) the chain is Cytoplasmic.

It belongs to the G-protein coupled receptor 1 family.

It localises to the cell membrane. In terms of biological role, odorant receptor. The polypeptide is Olfactory receptor 6T1 (OR6T1) (Homo sapiens (Human)).